Consider the following 725-residue polypeptide: MFDTQREELLWGGRKLVLETGKVARQADGAVVASYGETTVLATVVSMKEPKPGIDFLPLTVNYQERAYAAGRIPGGYFKREGRPSEKETLVSRLIDRPIRPLFVEGWRNDTQVVVTVLSHDLENDPDIVSMVAASAALTLSGVPFMGPIGAARVGYLGGQYKLNPTVQEMEESSLDLVVAGTDAAVLMVESEAKELPEDVMLGAVMFGHKHFQPVIEAIIRLAEKAAKEPRDFQPTDLTEVEKAVLEIGEADLREAYRKTVKQERYAAVDAVKAKVMAALVPEGGEAKFEPEKVKAAFKEVQAKVVRWNILDTGSRIDGRDVRTVRPILSEVGVLPRAHGSALFTRGETQALVVATLGTGDDEQFIDALEGTYKETFLLHYNFPPYSVGETGRMGSPGRREIGHGKLAWRAVHPLLPPAHEFPYTLRVVSEITESNGSSSMATVCGSSLALMDAGVPLRRPVAGIAMGLILEGERYAVLSDILGDEDHLGDMDFKVAGTEEGVTSLQMDIKIAGITEEIMRVALDQAKEGRAHILGEMAKALTAARPELGEHAPRIETMQIPTDKIREVIGTGGKVIREIVEKTGAKIDIQDTGVVKIASSDGKAIKAAYNWIRSIVAEPEAGMIYDGTVVKTMEFGAFVNFFGAKDGLVHISELAPQRVAKVTDVVKEGDKVKVKFLGQDERGKIRLSMKVVDQQTGEDLTEKLKAEREADRNRERQARQSAGE.

Mg(2+) is bound by residues D487 and D493. Residues 554–613 form the KH domain; that stretch reads PRIETMQIPTDKIREVIGTGGKVIREIVEKTGAKIDIQDTGVVKIASSDGKAIKAAYNWI. The S1 motif domain maps to 623–691; sequence GMIYDGTVVK…ERGKIRLSMK (69 aa). Residues 699 to 725 form a disordered region; that stretch reads EDLTEKLKAEREADRNRERQARQSAGE. A compositionally biased stretch (basic and acidic residues) spans 701-719; it reads LTEKLKAEREADRNRERQA.

The protein belongs to the polyribonucleotide nucleotidyltransferase family. The cofactor is Mg(2+).

The protein resides in the cytoplasm. The catalysed reaction is RNA(n+1) + phosphate = RNA(n) + a ribonucleoside 5'-diphosphate. In terms of biological role, involved in mRNA degradation. Catalyzes the phosphorolysis of single-stranded polyribonucleotides processively in the 3'- to 5'-direction. In Methylobacterium sp. (strain 4-46), this protein is Polyribonucleotide nucleotidyltransferase.